Reading from the N-terminus, the 275-residue chain is MNLLGKMIYVEGFMMIMATLLVSMSYGHRAMINDVAEAPVFDDVVSPNGLDSSWYDARATFYGDIHGGETQQGACGYGDLFKQGYGLETAALSTALFNEGYTCGACYQIMCVNDPQWCLPGSVKITATNFCPPDYSKTEGVWCNPPQKHFDLSLPMFLKIAQYKAGVVPVKYRRISCARTGGVKFETKGNPYFLMILPYNVGGAGDIKLMQVKGDKTGWITMQKNWGQNWTTGVNLTGQGISFRVTTSDGVTKDFNNVMPNNWGFGQTFDGKINF.

Residues 1-27 (MNLLGKMIYVEGFMMIMATLLVSMSYG) form the signal peptide. An Expansin-like EG45 domain is found at 72–182 (QGACGYGDLF…RRISCARTGG (111 aa)). The Expansin-like CBD domain occupies 192–271 (YFLMILPYNV…NWGFGQTFDG (80 aa)).

Belongs to the expansin family. Expansin A subfamily.

The protein resides in the secreted. It localises to the cell wall. Its subcellular location is the membrane. In terms of biological role, causes loosening and extension of plant cell walls by disrupting non-covalent bonding between cellulose microfibrils and matrix glucans. No enzymatic activity has been found. This Arabidopsis thaliana (Mouse-ear cress) protein is Expansin-A23 (EXPA23).